Reading from the N-terminus, the 287-residue chain is 2-dehydro-3-deoxyphosphooctonate aldolase (287 aa).

It belongs to the KdsA family.

It localises to the cytoplasm. It catalyses the reaction D-arabinose 5-phosphate + phosphoenolpyruvate + H2O = 3-deoxy-alpha-D-manno-2-octulosonate-8-phosphate + phosphate. The protein operates within carbohydrate biosynthesis; 3-deoxy-D-manno-octulosonate biosynthesis; 3-deoxy-D-manno-octulosonate from D-ribulose 5-phosphate: step 2/3. It participates in bacterial outer membrane biogenesis; lipopolysaccharide biosynthesis. This is 2-dehydro-3-deoxyphosphooctonate aldolase from Rhodopseudomonas palustris (strain ATCC BAA-98 / CGA009).